Here is a 557-residue protein sequence, read N- to C-terminus: Dihydroxy-acid dehydratase 2 (557 aa).

A [2Fe-2S] cluster-binding site is contributed by C50. D82 contributes to the Mg(2+) binding site. Residue C123 participates in [2Fe-2S] cluster binding. 2 residues coordinate Mg(2+): D124 and K125. Residue K125 is modified to N6-carboxylysine. C195 contributes to the [2Fe-2S] cluster binding site. Mg(2+) is bound at residue E447. S473 functions as the Proton acceptor in the catalytic mechanism.

It belongs to the IlvD/Edd family. In terms of assembly, homodimer. Requires [2Fe-2S] cluster as cofactor. Mg(2+) serves as cofactor.

It carries out the reaction (2R)-2,3-dihydroxy-3-methylbutanoate = 3-methyl-2-oxobutanoate + H2O. The catalysed reaction is (2R,3R)-2,3-dihydroxy-3-methylpentanoate = (S)-3-methyl-2-oxopentanoate + H2O. It functions in the pathway amino-acid biosynthesis; L-isoleucine biosynthesis; L-isoleucine from 2-oxobutanoate: step 3/4. Its pathway is amino-acid biosynthesis; L-valine biosynthesis; L-valine from pyruvate: step 3/4. Its function is as follows. Functions in the biosynthesis of branched-chain amino acids. Catalyzes the dehydration of (2R,3R)-2,3-dihydroxy-3-methylpentanoate (2,3-dihydroxy-3-methylvalerate) into 2-oxo-3-methylpentanoate (2-oxo-3-methylvalerate) and of (2R)-2,3-dihydroxy-3-methylbutanoate (2,3-dihydroxyisovalerate) into 2-oxo-3-methylbutanoate (2-oxoisovalerate), the penultimate precursor to L-isoleucine and L-valine, respectively. This Burkholderia lata (strain ATCC 17760 / DSM 23089 / LMG 22485 / NCIMB 9086 / R18194 / 383) protein is Dihydroxy-acid dehydratase 2.